We begin with the raw amino-acid sequence, 612 residues long: UBA domain-containing protein 6 (612 aa).

The region spanning 3–42 is the UBA domain; sequence DLDTKIKTLKNMGVSESDAKDSLERCGYDVESAAEFIFSG. A Phosphoserine modification is found at S595.

It is found in the cytoplasm. The protein localises to the nucleus. This chain is UBA domain-containing protein 6 (ucp6), found in Schizosaccharomyces pombe (strain 972 / ATCC 24843) (Fission yeast).